Here is a 354-residue protein sequence, read N- to C-terminus: Guanine nucleotide-binding protein G(i) subunit alpha (354 aa).

Residue Gly-2 is the site of N-myristoyl glycine attachment. Cys-3 carries the S-palmitoyl cysteine lipid modification. Residues 32-354 (REVKLLLLGA…KNNLKDCGLF (323 aa)) enclose the G-alpha domain. Positions 35-48 (KLLLLGAGESGKST) are G1 motif. GTP contacts are provided by residues 40-47 (GAGESGKS), 175-181 (LRTRVKT), 200-204 (DVGGQ), 269-272 (NKKD), and Ala-326. Residues Ser-47 and Thr-181 each contribute to the Mg(2+) site. Residues 173-181 (DVLRTRVKT) are G2 motif. The G3 motif stretch occupies residues 196-205 (FKMFDVGGQR). Residues 265 to 272 (ILFLNKKD) are G4 motif. A G5 motif region spans residues 324 to 329 (TCATDT).

Belongs to the G-alpha family. G(i/o/t/z) subfamily. As to quaternary structure, g proteins are composed of 3 units; alpha, beta and gamma. The alpha chain contains the guanine nucleotide binding site.

Guanine nucleotide-binding proteins (G proteins) are involved as modulators or transducers in various transmembrane signaling systems. This chain is Guanine nucleotide-binding protein G(i) subunit alpha, found in Planorbella trivolvis (Marsh rams-horn).